The primary structure comprises 211 residues: Protein-L-isoaspartate O-methyltransferase (211 aa).

The active site involves Ser62.

This sequence belongs to the methyltransferase superfamily. L-isoaspartyl/D-aspartyl protein methyltransferase family.

The protein localises to the cytoplasm. The enzyme catalyses [protein]-L-isoaspartate + S-adenosyl-L-methionine = [protein]-L-isoaspartate alpha-methyl ester + S-adenosyl-L-homocysteine. Catalyzes the methyl esterification of L-isoaspartyl residues in peptides and proteins that result from spontaneous decomposition of normal L-aspartyl and L-asparaginyl residues. It plays a role in the repair and/or degradation of damaged proteins. This chain is Protein-L-isoaspartate O-methyltransferase, found in Shewanella piezotolerans (strain WP3 / JCM 13877).